Consider the following 161-residue polypeptide: Ribonuclease P protein component (161 aa).

This sequence belongs to the RnpA family. As to quaternary structure, consists of a catalytic RNA component (M1 or rnpB) and a protein subunit.

It carries out the reaction Endonucleolytic cleavage of RNA, removing 5'-extranucleotides from tRNA precursor.. Its function is as follows. RNaseP catalyzes the removal of the 5'-leader sequence from pre-tRNA to produce the mature 5'-terminus. It can also cleave other RNA substrates such as 4.5S RNA. The protein component plays an auxiliary but essential role in vivo by binding to the 5'-leader sequence and broadening the substrate specificity of the ribozyme. In Helicobacter pylori (strain J99 / ATCC 700824) (Campylobacter pylori J99), this protein is Ribonuclease P protein component.